The following is a 180-amino-acid chain: ATP synthase subunit delta (180 aa).

The protein belongs to the ATPase delta chain family. As to quaternary structure, F-type ATPases have 2 components, F(1) - the catalytic core - and F(0) - the membrane proton channel. F(1) has five subunits: alpha(3), beta(3), gamma(1), delta(1), epsilon(1). F(0) has three main subunits: a(1), b(2) and c(10-14). The alpha and beta chains form an alternating ring which encloses part of the gamma chain. F(1) is attached to F(0) by a central stalk formed by the gamma and epsilon chains, while a peripheral stalk is formed by the delta and b chains.

It localises to the cell membrane. F(1)F(0) ATP synthase produces ATP from ADP in the presence of a proton or sodium gradient. F-type ATPases consist of two structural domains, F(1) containing the extramembraneous catalytic core and F(0) containing the membrane proton channel, linked together by a central stalk and a peripheral stalk. During catalysis, ATP synthesis in the catalytic domain of F(1) is coupled via a rotary mechanism of the central stalk subunits to proton translocation. Functionally, this protein is part of the stalk that links CF(0) to CF(1). It either transmits conformational changes from CF(0) to CF(1) or is implicated in proton conduction. This chain is ATP synthase subunit delta, found in Bacillus mycoides (strain KBAB4) (Bacillus weihenstephanensis).